Reading from the N-terminus, the 225-residue chain is Ribosomal RNA small subunit methyltransferase G (225 aa).

S-adenosyl-L-methionine is bound by residues glycine 69, 119–120 (AE), and arginine 136.

It belongs to the methyltransferase superfamily. RNA methyltransferase RsmG family.

The protein localises to the cytoplasm. Its function is as follows. Specifically methylates the N7 position of a guanine in 16S rRNA. In Pseudothermotoga lettingae (strain ATCC BAA-301 / DSM 14385 / NBRC 107922 / TMO) (Thermotoga lettingae), this protein is Ribosomal RNA small subunit methyltransferase G.